Consider the following 104-residue polypeptide: Urease subunit beta (104 aa).

It belongs to the urease beta subunit family. As to quaternary structure, heterotrimer of UreA (gamma), UreB (beta) and UreC (alpha) subunits. Three heterotrimers associate to form the active enzyme.

The protein localises to the cytoplasm. It carries out the reaction urea + 2 H2O + H(+) = hydrogencarbonate + 2 NH4(+). It participates in nitrogen metabolism; urea degradation; CO(2) and NH(3) from urea (urease route): step 1/1. This chain is Urease subunit beta, found in Rhodococcus jostii (strain RHA1).